The sequence spans 209 residues: MKASEWIDISQPLNNEIATWPGDTPFSYEVSCTKEQSGSVNIGKVTMSIHTGTHIDAPFHFDNDGKKVIDLDIHVYVGPARIIDVSSMDSIGVKELQQFNLEGVERLLLRTSSHGNAQKFPDIIPFLCAEIAPFLSKKGVRLIGVDVPSVDPLDDKELAAHHQLFQHGIHILENVVLDHVQDGDYELIALPLALTEADGSPVRAIIRPL.

Position 20 (Trp-20) interacts with substrate. Positions 50, 54, and 56 each coordinate Zn(2+). Catalysis depends on His-60, which acts as the Proton donor/acceptor. Zn(2+) is bound by residues His-161 and Glu-173.

The protein belongs to the Cyclase 1 superfamily. KynB family. In terms of assembly, homodimer. The cofactor is Zn(2+).

It carries out the reaction N-formyl-L-kynurenine + H2O = L-kynurenine + formate + H(+). Its pathway is amino-acid degradation; L-tryptophan degradation via kynurenine pathway; L-kynurenine from L-tryptophan: step 2/2. In terms of biological role, catalyzes the hydrolysis of N-formyl-L-kynurenine to L-kynurenine, the second step in the kynurenine pathway of tryptophan degradation. This chain is Kynurenine formamidase, found in Bacillus cytotoxicus (strain DSM 22905 / CIP 110041 / 391-98 / NVH 391-98).